Reading from the N-terminus, the 66-residue chain is DNA gyrase inhibitor YacG (66 aa).

The Zn(2+) site is built by cysteine 10, cysteine 13, cysteine 29, and cysteine 33. Positions 46–66 are disordered; it reads KRIPSDVQITDSDEWSDETRY. The span at 56 to 66 shows a compositional bias: acidic residues; it reads DSDEWSDETRY.

This sequence belongs to the DNA gyrase inhibitor YacG family. As to quaternary structure, interacts with GyrB. Zn(2+) is required as a cofactor.

Inhibits all the catalytic activities of DNA gyrase by preventing its interaction with DNA. Acts by binding directly to the C-terminal domain of GyrB, which probably disrupts DNA binding by the gyrase. In Sodalis glossinidius (strain morsitans), this protein is DNA gyrase inhibitor YacG.